We begin with the raw amino-acid sequence, 130 residues long: 3-aminoacrylate deaminase RutC (130 aa).

It belongs to the RutC family.

It catalyses the reaction (Z)-3-aminoacrylate + H2O + H(+) = 3-oxopropanoate + NH4(+). Functionally, involved in pyrimidine catabolism. Catalyzes the deamination of 3-aminoacrylate to malonic semialdehyde, a reaction that can also occur spontaneously. RutC may facilitate the reaction and modulate the metabolic fitness, rather than catalyzing essential functions. The chain is 3-aminoacrylate deaminase RutC from Methylorubrum extorquens (strain CM4 / NCIMB 13688) (Methylobacterium extorquens).